Reading from the N-terminus, the 192-residue chain is Nucleoside triphosphate pyrophosphatase (192 aa).

D73 (proton acceptor) is an active-site residue.

Belongs to the Maf family. The cofactor is a divalent metal cation.

It is found in the cytoplasm. It carries out the reaction a ribonucleoside 5'-triphosphate + H2O = a ribonucleoside 5'-phosphate + diphosphate + H(+). It catalyses the reaction a 2'-deoxyribonucleoside 5'-triphosphate + H2O = a 2'-deoxyribonucleoside 5'-phosphate + diphosphate + H(+). In terms of biological role, nucleoside triphosphate pyrophosphatase. May have a dual role in cell division arrest and in preventing the incorporation of modified nucleotides into cellular nucleic acids. The chain is Nucleoside triphosphate pyrophosphatase from Ehrlichia ruminantium (strain Gardel).